The following is a 338-amino-acid chain: Phenylalanine--tRNA ligase alpha subunit (338 aa).

The tract at residues 71 to 101 is disordered; it reads QFEEKRSSLSQQTSSSDTYQSLPDLTLPGRQ. Low complexity predominate over residues 78-92; it reads SLSQQTSSSDTYQSL. E253 is a Mg(2+) binding site.

Belongs to the class-II aminoacyl-tRNA synthetase family. Phe-tRNA synthetase alpha subunit type 1 subfamily. Tetramer of two alpha and two beta subunits. Mg(2+) serves as cofactor.

The protein localises to the cytoplasm. It catalyses the reaction tRNA(Phe) + L-phenylalanine + ATP = L-phenylalanyl-tRNA(Phe) + AMP + diphosphate + H(+). The polypeptide is Phenylalanine--tRNA ligase alpha subunit (Desulfotalea psychrophila (strain LSv54 / DSM 12343)).